Reading from the N-terminus, the 262-residue chain is Putative ABC transporter ATP-binding protein SAV_3608 (262 aa).

Residues 18-248 (LDVAGLAFAY…DTLMRAHRLE (231 aa)) form the ABC transporter domain. 51 to 58 (GPNGAGKT) contacts ATP.

It belongs to the ABC transporter superfamily.

Its subcellular location is the cell membrane. Probably part of an ABC transporter complex. Responsible for energy coupling to the transport system. The sequence is that of Putative ABC transporter ATP-binding protein SAV_3608 from Streptomyces avermitilis (strain ATCC 31267 / DSM 46492 / JCM 5070 / NBRC 14893 / NCIMB 12804 / NRRL 8165 / MA-4680).